The chain runs to 649 residues: Endoplasmic reticulum membrane protein 65 (649 aa).

The tract at residues 1-55 (MGSNTSPGQADPLESENESSLTSRFLPNKRDGGKDNESVIPEKEEPDLNEPVLAV) is disordered. Residues 1-165 (MGSNTSPGQA…LATPYAIEKT (165 aa)) lie on the Cytoplasmic side of the membrane. Over residues 28–43 (NKRDGGKDNESVIPEK) the composition is skewed to basic and acidic residues. At S94 the chain carries Phosphoserine. The helical transmembrane segment at 166-186 (FLFGWFVSVDSFLYIFTLFPI) threads the bilayer. Residues 187 to 302 (RVLISFFTLS…NFWNPAGWMT (116 aa)) are Lumenal-facing. N215 carries N-linked (GlcNAc...) asparagine glycosylation. A helical transmembrane segment spans residues 303-323 (FFYYFAISLAYMVLHTLVLLY). The Cytoplasmic portion of the chain corresponds to 324–366 (QIITLNVTVNSYSNAVLALLMSNQLVEIKGAVFKKFEKENLFQ). The helical transmembrane segment at 367 to 387 (LTCSDVVERFQITIMVIIIFL) threads the bilayer. The Lumenal segment spans residues 388–414 (RNLAELYTTSSLDQPLLTFKRLKTLLA). A helical transmembrane segment spans residues 415-435 (PFFWVIGSELFVDWLKHAFII). Topologically, residues 436-479 (KFNYIKPSIYSRFTDVLCHDYVASGAQLTQTVTGCSQQVARRMG) are cytoplasmic. The chain crosses the membrane as a helical span at residues 480–500 (LPVLPLVCVFIRTSMQTWSMF). Residues 501-557 (RSTHSMKQEIAKSIGTIFPTKDNYVYYLPNKEANTYNAGKEASWETLLLSVVRGKSG) lie on the Lumenal side of the membrane. The helical transmembrane segment at 558–578 (IAFLFFMAIMLKLLLGKAILA) threads the bilayer. Topologically, residues 579–649 (ITQSRYESMQ…RYAMHSKRIW (71 aa)) are cytoplasmic.

It belongs to the TAPT1 family. As to quaternary structure, interacts with slp1.

The protein localises to the endoplasmic reticulum membrane. May be involved in membrane protein folding. The polypeptide is Endoplasmic reticulum membrane protein 65 (Schizosaccharomyces pombe (strain 972 / ATCC 24843) (Fission yeast)).